The chain runs to 201 residues: Recombination protein RecR (201 aa).

The C4-type zinc finger occupies 60–75 (CSVCGNIDTTDPCSIC). The Toprim domain occupies 83–178 (GTIIVVEDIS…KITRLAHGVP (96 aa)).

Belongs to the RecR family.

May play a role in DNA repair. It seems to be involved in an RecBC-independent recombinational process of DNA repair. It may act with RecF and RecO. This chain is Recombination protein RecR, found in Bartonella bacilliformis (strain ATCC 35685 / KC583 / Herrer 020/F12,63).